The primary structure comprises 541 residues: Glucose-6-phosphate isomerase (541 aa).

The Proton donor role is filled by E346. Residues H377 and K506 contribute to the active site.

Belongs to the GPI family.

It is found in the cytoplasm. It carries out the reaction alpha-D-glucose 6-phosphate = beta-D-fructose 6-phosphate. The protein operates within carbohydrate biosynthesis; gluconeogenesis. Its pathway is carbohydrate degradation; glycolysis; D-glyceraldehyde 3-phosphate and glycerone phosphate from D-glucose: step 2/4. Catalyzes the reversible isomerization of glucose-6-phosphate to fructose-6-phosphate. The polypeptide is Glucose-6-phosphate isomerase (Rhizobium etli (strain CIAT 652)).